An 856-amino-acid polypeptide reads, in one-letter code: MGNSHSSENGGNSGSGGGSGGGGSGYSGVSENMIIDLEGRYHIDYKNRNYKKLKPQMFSTFFEHYEIVQADSLINSDFIKNKTVKKNRDNSSNNNSNNNSNNNNNNNTLNNSTIITTTTTTTTTSTPTTTIMITPPQQQQQQRTSLDLTNRDISESSTPNEQQIRLAQEETENQEIVESSFLKSSPVPSPSSSVLKSFESDFQLNTDLTTETFDDNSAEKKRQQQQQQQQNEDSKQSSQQQTQKSKDKDESAKIVNNKSSSTTNIKPILAAAQTSRSTSIPAFNRNKTKEPTKQKIKKEHSTLRKNSLSSSNIITPNNTTNTNAKDGASYFNENSLMSVKSDIKIFSLDLSINRLENITNDILSIMARFEIQELTLSTNFFQIIPDLQLVKSLTTVNLTRNKLSKLQTSVFIELPSLTSLILDRNFISSIPDDIDQIKNLKYLSIKHNALEYLPNSLSNLSQLISLDLSQNKLKTLPPNFDDLINLRMVWLSYNQITSLPSMRKLVNLVTFDISSNKLLSLPKDFAYLVPSRIKQSYSDIDIDEYDENINTCNNINSNNNDSNNSNNNNNNNNDNNNNCNKNNILEMINSTELEGGGLGCLKELNIRDNRELISLPVEYKQVESLMTLVTSIPSEIIPGIFLGGLDSANNAPILQTLGITHILLAIGDCEPFFPKTFKYYSIDDARDAPQYDISQHFEQTNCFIESGRKSGGVLVHCRAGISRSSTLVISYLMKYQRMTFKQAMDLVQSKRPQIQPNPGFKDQLLKYEAKLFCTNILNISSHNSNNKNNNSSNNRKSINNRKSNNIIITINNSSNSNNNNSTDNSNNSSTSTTPNLSSLSSDSSSSASLSKLSISK.

Residues M1–G10 show a composition bias toward low complexity. Disordered regions lie at residues M1 to S24, V84 to L195, and D214 to D326. Residue G2 is the site of N-myristoyl glycine attachment. A compositionally biased stretch (gly residues) spans G11–S24. A compositionally biased stretch (low complexity) spans N90–Q142. Residues E155 to R165 are compositionally biased toward polar residues. Composition is skewed to low complexity over residues E178–L195 and Q224–Q243. Composition is skewed to polar residues over residues I254 to I265 and A272 to P281. Low complexity predominate over residues N306–N323. LRR repeat units lie at residues K344 to I365, E370 to K391, S392 to E413, S416 to I437, N439 to S461, Q462 to I484, N485 to V506, and N507 to L528. A disordered region spans residues N554–N577. Residues I632–C773 enclose the Tyrosine-protein phosphatase domain. C717 serves as the catalytic Phosphocysteine intermediate. The tract at residues I810–K856 is disordered.

The protein belongs to the protein-tyrosine phosphatase family. Non-receptor class dual specificity subfamily.

It catalyses the reaction O-phospho-L-tyrosyl-[protein] + H2O = L-tyrosyl-[protein] + phosphate. The enzyme catalyses O-phospho-L-seryl-[protein] + H2O = L-seryl-[protein] + phosphate. The catalysed reaction is O-phospho-L-threonyl-[protein] + H2O = L-threonyl-[protein] + phosphate. In terms of biological role, probable phosphatase with dual specificity toward Ser/Thr and Tyr-containing proteins. This chain is MAP kinase phosphatase with leucine-rich repeats protein 3 (mpl3), found in Dictyostelium discoideum (Social amoeba).